The sequence spans 359 residues: Chorismate synthase (359 aa).

NADP(+) is bound by residues Arg48 and Arg54. Residues 125–127 (RSS), 243–244 (NA), Gly283, 298–302 (KPTSS), and Arg324 each bind FMN.

The protein belongs to the chorismate synthase family. Homotetramer. The cofactor is FMNH2.

The catalysed reaction is 5-O-(1-carboxyvinyl)-3-phosphoshikimate = chorismate + phosphate. The protein operates within metabolic intermediate biosynthesis; chorismate biosynthesis; chorismate from D-erythrose 4-phosphate and phosphoenolpyruvate: step 7/7. In terms of biological role, catalyzes the anti-1,4-elimination of the C-3 phosphate and the C-6 proR hydrogen from 5-enolpyruvylshikimate-3-phosphate (EPSP) to yield chorismate, which is the branch point compound that serves as the starting substrate for the three terminal pathways of aromatic amino acid biosynthesis. This reaction introduces a second double bond into the aromatic ring system. In Mannheimia succiniciproducens (strain KCTC 0769BP / MBEL55E), this protein is Chorismate synthase.